The chain runs to 333 residues: Holliday junction branch migration complex subunit RuvB (333 aa).

The segment at Met-1–Tyr-182 is large ATPase domain (RuvB-L). ATP is bound by residues Leu-21, Arg-22, Gly-63, Lys-66, Thr-67, Thr-68, Glu-129–Phe-131, Arg-172, Tyr-182, and Arg-219. Thr-67 provides a ligand contact to Mg(2+). Residues Thr-183–Gln-253 form a small ATPAse domain (RuvB-S) region. The interval Lys-256 to Val-333 is head domain (RuvB-H). Residues Arg-311 and Arg-316 each coordinate DNA.

The protein belongs to the RuvB family. In terms of assembly, homohexamer. Forms an RuvA(8)-RuvB(12)-Holliday junction (HJ) complex. HJ DNA is sandwiched between 2 RuvA tetramers; dsDNA enters through RuvA and exits via RuvB. An RuvB hexamer assembles on each DNA strand where it exits the tetramer. Each RuvB hexamer is contacted by two RuvA subunits (via domain III) on 2 adjacent RuvB subunits; this complex drives branch migration. In the full resolvosome a probable DNA-RuvA(4)-RuvB(12)-RuvC(2) complex forms which resolves the HJ.

Its subcellular location is the cytoplasm. The catalysed reaction is ATP + H2O = ADP + phosphate + H(+). Functionally, the RuvA-RuvB-RuvC complex processes Holliday junction (HJ) DNA during genetic recombination and DNA repair, while the RuvA-RuvB complex plays an important role in the rescue of blocked DNA replication forks via replication fork reversal (RFR). RuvA specifically binds to HJ cruciform DNA, conferring on it an open structure. The RuvB hexamer acts as an ATP-dependent pump, pulling dsDNA into and through the RuvAB complex. RuvB forms 2 homohexamers on either side of HJ DNA bound by 1 or 2 RuvA tetramers; 4 subunits per hexamer contact DNA at a time. Coordinated motions by a converter formed by DNA-disengaged RuvB subunits stimulates ATP hydrolysis and nucleotide exchange. Immobilization of the converter enables RuvB to convert the ATP-contained energy into a lever motion, pulling 2 nucleotides of DNA out of the RuvA tetramer per ATP hydrolyzed, thus driving DNA branch migration. The RuvB motors rotate together with the DNA substrate, which together with the progressing nucleotide cycle form the mechanistic basis for DNA recombination by continuous HJ branch migration. Branch migration allows RuvC to scan DNA until it finds its consensus sequence, where it cleaves and resolves cruciform DNA. This Bacillus cereus (strain G9842) protein is Holliday junction branch migration complex subunit RuvB.